An 834-amino-acid polypeptide reads, in one-letter code: Protein SEY1 (834 aa).

Residues 1 to 26 are disordered; the sequence is MSNVPSPTVTLEGDSPDAAHEAVSSS. At 1-733 the chain is on the cytoplasmic side; the sequence is MSNVPSPTVT…KRSIMQHVTQ (733 aa). The GB1/RHD3-type G domain occupies 63-296; sequence PGDYRIISVF…SESFLFKPNY (234 aa). 73–80 contributes to the GTP binding site; sequence GSQSTGKS. Residues 659-688 are a coiled coil; it reads VRDKKLKRQYETVREEKEAEEEDEDEWDSE. Residues 670–689 are disordered; the sequence is TVREEKEAEEEDEDEWDSED. The segment covering 676-689 has biased composition (acidic residues); that stretch reads EAEEEDEDEWDSED. Residues 734–754 form a helical membrane-spanning segment; sequence IPYYIYIVILVLGWNEFMAIL. Residues 755 to 757 are Lumenal-facing; that stretch reads RNP. Residues 758–778 traverse the membrane as a helical segment; the sequence is FFFTLLIMLAGATYVMYSMNL. Residues 779-834 are Cytoplasmic-facing; it reads LGPASIVVQRMANEALGLAKEKLREFVVDDHMQHGHNMKKMTTNDIELDDLSEEST.

The protein belongs to the TRAFAC class dynamin-like GTPase superfamily. GB1/RHD3 GTPase family. RHD3 subfamily.

It localises to the endoplasmic reticulum membrane. In terms of biological role, cooperates with the reticulon proteins and tubule-shaping DP1 family proteins to generate and maintain the structure of the tubular endoplasmic reticulum network. Has GTPase activity, which is required for its function in ER organization. This chain is Protein SEY1, found in Clavispora lusitaniae (strain ATCC 42720) (Yeast).